The primary structure comprises 320 residues: Mitochondrial ribosome-associated GTPase 1 (320 aa).

One can recognise a CP-type G domain in the interval 37 to 209 (LKQMRASPRK…LLDTPGVLPP (173 aa)). Residues 81 to 84 (NKMD), 153 to 158 (NVGKSS), and G205 contribute to the GTP site.

It belongs to the TRAFAC class YlqF/YawG GTPase family. MTG1 subfamily.

The protein resides in the mitochondrion inner membrane. In terms of biological role, plays a role in the regulation of the mitochondrial ribosome assembly and of translational activity. Displays mitochondrial GTPase activity. The chain is Mitochondrial ribosome-associated GTPase 1 from Ictalurus punctatus (Channel catfish).